Reading from the N-terminus, the 412-residue chain is Flap endonuclease 1-B (412 aa).

An N-domain region spans residues 1 to 105 (MGIKGLTKLL…KELAKRSLKR (105 aa)). A Mg(2+)-binding site is contributed by D34. Residue R71 coordinates DNA. Residues D87, E159, E161, D180, and D182 each coordinate Mg(2+). Positions 123-254 (LIEKFSKRTV…QRALKLIRQH (132 aa)) are I-domain. E159 contributes to the DNA binding site. Residues G232 and D234 each contribute to the DNA site. D234 contributes to the Mg(2+) binding site.

The protein belongs to the XPG/RAD2 endonuclease family. FEN1 subfamily. In terms of assembly, interacts with PCNA. Three molecules of FEN1 bind to one PCNA trimer with each molecule binding to one PCNA monomer. PCNA stimulates the nuclease activity without altering cleavage specificity. Requires Mg(2+) as cofactor. In terms of processing, phosphorylated. Phosphorylation upon DNA damage induces relocalization to the nuclear plasma.

It is found in the nucleus. Its subcellular location is the nucleolus. The protein resides in the nucleoplasm. The protein localises to the mitochondrion. Its function is as follows. Structure-specific nuclease with 5'-flap endonuclease and 5'-3' exonuclease activities involved in DNA replication and repair. During DNA replication, cleaves the 5'-overhanging flap structure that is generated by displacement synthesis when DNA polymerase encounters the 5'-end of a downstream Okazaki fragment. It enters the flap from the 5'-end and then tracks to cleave the flap base, leaving a nick for ligation. Also involved in the long patch base excision repair (LP-BER) pathway, by cleaving within the apurinic/apyrimidinic (AP) site-terminated flap. Acts as a genome stabilization factor that prevents flaps from equilibrating into structures that lead to duplications and deletions. Also possesses 5'-3' exonuclease activity on nicked or gapped double-stranded DNA, and exhibits RNase H activity. Also involved in replication and repair of rDNA and in repairing mitochondrial DNA. In Oryza sativa subsp. indica (Rice), this protein is Flap endonuclease 1-B.